Reading from the N-terminus, the 84-residue chain is MKVMFMLALLFSSLVATSAFRLPFQFFGANEDFNSGLTKRNYYESKPYKREFNADDLTLRFGKRGGAGEPLAFSPDMLSLRFGK.

The first 19 residues, 1–19 (MKVMFMLALLFSSLVATSA), serve as a signal peptide directing secretion. A propeptide spanning residues 20-48 (FRLPFQFFGANEDFNSGLTKRNYYESKPY) is cleaved from the precursor. F61 and F82 each carry phenylalanine amide.

It belongs to the FARP (FMRFamide related peptide) family. In terms of tissue distribution, each flp gene is expressed in a distinct set of neurons.

It localises to the secreted. Its function is as follows. FMRFamides and FMRFamide-like peptides are neuropeptides. The protein is FMRFamide-like neuropeptides 26 of Caenorhabditis elegans.